The sequence spans 778 residues: Probable dipeptidyl peptidase 4 (778 aa).

Positions Met1–Ala18 are cleaved as a signal peptide. N-linked (GlcNAc...) asparagine glycosylation is found at Asn84, Asn114, and Asn222. Catalysis depends on charge relay system residues Ser616, Asp693, and His728.

The protein belongs to the peptidase S9B family.

It is found in the secreted. It carries out the reaction Release of an N-terminal dipeptide, Xaa-Yaa-|-Zaa-, from a polypeptide, preferentially when Yaa is Pro, provided Zaa is neither Pro nor hydroxyproline.. Its function is as follows. Extracellular dipeptidyl-peptidase which removes N-terminal dipeptides sequentially from polypeptides having unsubstituted N-termini provided that the penultimate residue is proline. Contributes to pathogenicity. This chain is Probable dipeptidyl peptidase 4 (DPP4), found in Arthroderma benhamiae (strain ATCC MYA-4681 / CBS 112371) (Trichophyton mentagrophytes).